The primary structure comprises 966 residues: Aminopeptidase N (966 aa).

At M1–S8 the chain is on the cytoplasmic side. The helical; Signal-anchor for type II membrane protein transmembrane segment at K9 to V32 threads the bilayer. Residues Y33 to S68 are cytosolic Ser/Thr-rich junction. Topologically, residues Y33 to S966 are extracellular. Residues E42–A64 are disordered. Over residues S44–A64 the composition is skewed to low complexity. The interval K69–S966 is metalloprotease. N-linked (GlcNAc...) asparagine glycosylation is found at N106, N114, and N128. Sulfotyrosine is present on Y176. 4 N-linked (GlcNAc...) asparagine glycosylation sites follow: N234, N288, N318, and N332. G351–N355 provides a ligand contact to substrate. Residue H387 participates in Zn(2+) binding. Catalysis depends on E388, which acts as the Proton acceptor. Zn(2+) contacts are provided by H391 and E410. Sulfotyrosine is present on residues Y418 and Y423. 4 N-linked (GlcNAc...) asparagine glycosylation sites follow: N573, N606, N624, and N734. C760 and C767 form a disulfide bridge. N-linked (GlcNAc...) asparagine glycans are attached at residues N784 and N817. A disulfide bridge connects residues C797 and C833. Residue Y852 is modified to Phosphotyrosine.

Belongs to the peptidase M1 family. Homodimer. Interacts with SLC6A19. The cofactor is Zn(2+). N- and O-glycosylated. In terms of processing, sulfated. Post-translationally, may undergo proteolysis and give rise to a soluble form. Expressed in the intestinal brush border (at protein level). Highly expressed in intestinal tract and kidney, present in liver, lymph node, spleen, and brain. Found as well in monocytes, macrophages, dendritic cells, veiled cells and B-cells but not on T-cells and thymocytes.

It is found in the cell membrane. It carries out the reaction Release of an N-terminal amino acid, Xaa-|-Yaa- from a peptide, amide or arylamide. Xaa is preferably Ala, but may be most amino acids including Pro (slow action). When a terminal hydrophobic residue is followed by a prolyl residue, the two may be released as an intact Xaa-Pro dipeptide.. Its function is as follows. Broad specificity aminopeptidase which plays a role in the final digestion of peptides generated from hydrolysis of proteins by gastric and pancreatic proteases. Also involved in the processing of various peptides including peptide hormones, such as angiotensin III and IV, neuropeptides, and chemokines. May also be involved the cleavage of peptides bound to major histocompatibility complex class II molecules of antigen presenting cells. May have a role in angiogenesis and promote cholesterol crystallization. May have a role in amino acid transport by acting as binding partner of amino acid transporter SLC6A19 and regulating its activity. The chain is Aminopeptidase N (Anpep) from Mus musculus (Mouse).